Here is a 709-residue protein sequence, read N- to C-terminus: MMETPAESVRARVSSVTFYNVTQTAGRWWAIWVVGIVPIKREDVETLIVVQACQPPLGGSLEPPVVNAPSTTELNFLRWERELRRSGGLIAMLADAAEKDLFDLSFRTRDRRLLSAARVEDEQGLIFQPLFPAQVVCQSCSGDDGRDQQPPPVDGFGSEMEGEQTCPHAQRHSESPGQLDVYIRTPRGDVFTYSTETPDDPSPVPFRDILRPVTYEVDLVSSDGATGRGGDARRHRVSLKILEPAGGFESWLVNSWSMAGGGLYAFLRSIYASCYANHRGTKPIFYLLDPELCPGGSDFQPYVPGFPFLPIHYVGRARPAFWHRAPHSEGLLLLDLNLGVSGTPLADALLGLDARSGQRRGSLLLQQIWPPTRKEINPRHVCTREGGEGGGEDETTVVGRAEATAILEADATWWLYELARCHLSARGAPVGTPDGGGQARDAQTWLRALHRYGTSDTRRALGGLYTAVTRVLLHAAADLGLTWAYADEFILGFVAPTSAHPSEEPLAQAFLQGVKDSEDASRLDRDVMGGEATVARRHIRVKARRGPGCLLMAIFQGDLYVGGCREHSGPFLVWHEAFSWTLDQLAARPEADKAPPSHDHLLTLVRDLTRRLAPGRRRNRFWALPRAWLQRLRRAGLRLSGSHVCLLDKDGARPAPCQTATEHGLSPTAYFREIMAFLLDVISALHPGYTIPMEITRETDLLMTVLSLF.

Positions serine 141–proline 176 are disordered.

Belongs to the herpesviridae HEPA family. Associates with the primase and the helicase to form the helicase-primase complex. Interacts with the origin-binding protein. Interacts with the polymerase catalytic subunit.

It localises to the host nucleus. Functionally, component of the helicase/primase complex. Unwinds the DNA at the replication forks and generates single-stranded DNA for both leading and lagging strand synthesis. The primase synthesizes short RNA primers on the lagging strand that the polymerase presumably elongates using dNTPs. The primase-associated factor has no known catalytic activity in the complex and may serve to facilitate the formation of the replisome by directly interacting with the origin-binding protein and the polymerase. The polypeptide is DNA helicase/primase complex-associated protein (Epstein-Barr virus (strain B95-8) (HHV-4)).